An 846-amino-acid polypeptide reads, in one-letter code: Pseudolaratriene synthase, chloroplastic (846 aa).

Residues 1-58 (MSRFTSATHGLNLSIKMPISVSQVPSIRSNTSKYELQKLRSTGRSVLQTRRQLAIINM) constitute a chloroplast transit peptide. Mg(2+)-binding residues include aspartate 595, aspartate 599, and aspartate 747. A DDXXD motif motif is present at residues 595–599 (DDIYD).

It belongs to the terpene synthase family. Mg(2+) is required as a cofactor. Expressed in young and mature roots. Expressed at low levels in barks.

Its subcellular location is the plastid. It is found in the chloroplast. The enzyme catalyses (2E,6E,10E)-geranylgeranyl diphosphate = pseudolaratriene + diphosphate. It participates in terpene metabolism. In terms of biological role, converts geranylgeranyl diphosphate to an new 5,7-fused bicyclic diterpene, named pseudolaratriene. Catalyzes the first committed step in pseudolaric acid B (PAB) biosynthesis. PAB exhibits antiproliferative activity by inhibiting microtubule polymerization, and has demonstrated antitumor properties against several cancer types. In Pseudolarix amabilis (Golden larch), this protein is Pseudolaratriene synthase, chloroplastic.